Here is a 360-residue protein sequence, read N- to C-terminus: Cytochrome b-c1 complex subunit 2, mitochondrial (360 aa).

The transit peptide at methionine 1–lysine 15 directs the protein to the mitochondrion.

The protein belongs to the peptidase M16 family. UQCRC2/QCR2 subfamily. Component of the ubiquinol-cytochrome c oxidoreductase (cytochrome b-c1 complex, complex III, CIII), a multisubunit enzyme composed of 3 respiratory subunits cytochrome b, cytochrome c1 and Rieske protein, 2 core protein subunits, and additional low-molecular weight protein subunits. The complex exists as an obligatory dimer and forms supercomplexes (SCs) in the inner mitochondrial membrane with cytochrome c oxidase (complex IV, CIV).

The protein localises to the mitochondrion inner membrane. Functionally, component of the ubiquinol-cytochrome c oxidoreductase, a multisubunit transmembrane complex that is part of the mitochondrial electron transport chain which drives oxidative phosphorylation. The respiratory chain contains 3 multisubunit complexes succinate dehydrogenase (complex II, CII), ubiquinol-cytochrome c oxidoreductase (cytochrome b-c1 complex, complex III, CIII) and cytochrome c oxidase (complex IV, CIV), that cooperate to transfer electrons derived from NADH and succinate to molecular oxygen, creating an electrochemical gradient over the inner membrane that drives transmembrane transport and the ATP synthase. The cytochrome b-c1 complex catalyzes electron transfer from ubiquinol to cytochrome c, linking this redox reaction to translocation of protons across the mitochondrial inner membrane, with protons being carried across the membrane as hydrogens on the quinol. In the process called Q cycle, 2 protons are consumed from the matrix, 4 protons are released into the intermembrane space and 2 electrons are passed to cytochrome c. This chain is Cytochrome b-c1 complex subunit 2, mitochondrial (QCR2), found in Kluyveromyces lactis (strain ATCC 8585 / CBS 2359 / DSM 70799 / NBRC 1267 / NRRL Y-1140 / WM37) (Yeast).